The chain runs to 246 residues: 2,3-bisphosphoglycerate-dependent phosphoglycerate mutase (246 aa).

Substrate contacts are provided by residues 8-15 (RHGQSQWN), 21-22 (TG), arginine 60, 87-90 (EKHY), lysine 98, 114-115 (RR), and 183-184 (GN). Histidine 9 (tele-phosphohistidine intermediate) is an active-site residue. Glutamate 87 acts as the Proton donor/acceptor in catalysis.

It belongs to the phosphoglycerate mutase family. BPG-dependent PGAM subfamily. In terms of assembly, homodimer.

It carries out the reaction (2R)-2-phosphoglycerate = (2R)-3-phosphoglycerate. The protein operates within carbohydrate degradation; glycolysis; pyruvate from D-glyceraldehyde 3-phosphate: step 3/5. Its function is as follows. Catalyzes the interconversion of 2-phosphoglycerate and 3-phosphoglycerate. This Dichelobacter nodosus (strain VCS1703A) protein is 2,3-bisphosphoglycerate-dependent phosphoglycerate mutase.